A 36-amino-acid polypeptide reads, in one-letter code: U4-ctenitoxin-Pr1a (36 aa).

3 cysteine pairs are disulfide-bonded: Cys3–Cys17, Cys10–Cys22, and Cys16–Cys34.

Expressed by the venom gland.

Its subcellular location is the secreted. Its function is as follows. Neurotoxin. Causes spastic paralysis and death in mice. Moderate inhibitor of L-type calcium channels (Cav1/CACNA1). This Phoneutria reidyi (Brazilian Amazonian armed spider) protein is U4-ctenitoxin-Pr1a.